A 289-amino-acid polypeptide reads, in one-letter code: 4-hydroxy-tetrahydrodipicolinate synthase (289 aa).

Thr-43 contributes to the pyruvate binding site. Residue Tyr-131 is the Proton donor/acceptor of the active site. The active-site Schiff-base intermediate with substrate is the Lys-160. Val-200 is a binding site for pyruvate.

It belongs to the DapA family. In terms of assembly, homotetramer; dimer of dimers.

It is found in the cytoplasm. It catalyses the reaction L-aspartate 4-semialdehyde + pyruvate = (2S,4S)-4-hydroxy-2,3,4,5-tetrahydrodipicolinate + H2O + H(+). It functions in the pathway amino-acid biosynthesis; L-lysine biosynthesis via DAP pathway; (S)-tetrahydrodipicolinate from L-aspartate: step 3/4. In terms of biological role, catalyzes the condensation of (S)-aspartate-beta-semialdehyde [(S)-ASA] and pyruvate to 4-hydroxy-tetrahydrodipicolinate (HTPA). In Methanococcus maripaludis (strain C7 / ATCC BAA-1331), this protein is 4-hydroxy-tetrahydrodipicolinate synthase.